The chain runs to 274 residues: MKPMKTSWADEVEADYVDGLPPTKEYTQGNLKFVAEYKYNEDGKKVKVVRTYKIQKQTVPKVVARRRNWSKFGDSRLDKPGPCSQTTMVAEEVHMVFISSKELEQAQAQEPQMEPGKNIARCRICNGEHWSVNCPYKGTSMDSKTLMESKATAAAAAAVSDASKTGKYVSPFLKEGGCAIGGGIGAKPWVRERSAVRISNLSESMTEADLEELVKKIGPHTKLYLAREKNTGLCKGFAYVHFKFRQDAAAAIEILNGHGYDHLILCVEWSKPQP.

In terms of domain architecture, RRM spans Ser194–Pro272.

Belongs to the eIF-3 subunit G family. As to quaternary structure, component of the eukaryotic translation initiation factor 3 (eIF-3) complex. The eIF-3 complex interacts with pix.

The protein localises to the cytoplasm. Its function is as follows. RNA-binding component of the eukaryotic translation initiation factor 3 (eIF-3) complex, which is involved in protein synthesis of a specialized repertoire of mRNAs and, together with other initiation factors, stimulates binding of mRNA and methionyl-tRNAi to the 40S ribosome. The eIF-3 complex specifically targets and initiates translation of a subset of mRNAs involved in cell proliferation. This subunit can bind 18S rRNA. The chain is Eukaryotic translation initiation factor 3 subunit G-2 from Drosophila pseudoobscura pseudoobscura (Fruit fly).